Reading from the N-terminus, the 145-residue chain is Large ribosomal subunit protein uL11 (145 aa).

Belongs to the universal ribosomal protein uL11 family. As to quaternary structure, part of the ribosomal stalk of the 50S ribosomal subunit. Interacts with L10 and the large rRNA to form the base of the stalk. L10 forms an elongated spine to which L12 dimers bind in a sequential fashion forming a multimeric L10(L12)X complex. In terms of processing, one or more lysine residues are methylated.

Its function is as follows. Forms part of the ribosomal stalk which helps the ribosome interact with GTP-bound translation factors. This Rickettsia akari (strain Hartford) protein is Large ribosomal subunit protein uL11.